The following is a 467-amino-acid chain: Asparagine--tRNA ligase (467 aa).

Belongs to the class-II aminoacyl-tRNA synthetase family. As to quaternary structure, homodimer.

It is found in the cytoplasm. The enzyme catalyses tRNA(Asn) + L-asparagine + ATP = L-asparaginyl-tRNA(Asn) + AMP + diphosphate + H(+). This Haemophilus influenzae (strain PittGG) protein is Asparagine--tRNA ligase.